Reading from the N-terminus, the 881-residue chain is MFWKFDLHTSSHLDTLLEREDLSLPELLDEEDVLQECKVVNRKLLDFLLQPPHLQAMVAWVTQEPPDSGEERLRYKYPSVACEILTSDVPQINDALGADESLLNRLYGFLQSTGSLNPLLASFFSKVMGILINRKTDQLVSFLRKKDDFVDLLLQHIGTSAIMDLLLRLLTCVERPQLRQDVVNWLNEEKIVQRLIEQIHPSKDENQHSNASQSLCDIIRLSREQMIQVQDSPEPDQLLATLEKQETIEQLLSNMFEGEQSQSVIVSGIQVLLTLLEPRRPRSESVTVNSFFSSVDGQLELLAQGALESTVSSVGALHALRPRLSCFHQLLLEPPKLEPLQMTWGMLAPPLGNTRLHVVKLLASALSANDAALTHELLALDVPNTMLDLFFHYVFNNFLHAQVEGCVSTMLSLGPPPDSSPETPIQNPVVKHLLQQCRLVERILTSWEENDRVQCAGGPRKGYMGHLTRVAGALVQNTEKGPNAEQLRQLLKELPSEQQEQWEAFVSGPLAETNKKNMVDLVNTHHLHSSSDDEDDRLKEFNFPEEAVLQQAFMDFQMQRMTSAFIDHFGFNDEEFGEQEESVNAPFDKTANITFSLNADDENPNANLLEICYKDRIQQFDDDEEEEDEEEAQGSGESDGEDGAWQGSQLARGARLGQPPGVRSGGSTDSEDEEEEDEEEEEDEEGIGCAARGGATPLSYPSPGPQPPGPSWTATFDPVPTDAPTSPRVSGEEELHTGPPAPQGPLSVPQGLPTQSLASPPARDALQLRSQDPTPPSAPQEATEGSKVTEPSAPCQALVSIGDLQATFHGIRSAPSSSDSATRDPSTSVPASGAHQPPQTTEGEKSPEPLGLPQSQSAQALTPPPIPNGSAPEGPASPGSQ.

Residues 10–403 (SSHLDTLLER…VFNNFLHAQV (394 aa)) form an interaction with PPP6C region. A Phosphoserine modification is found at Ser232. Phosphothreonine is present on Thr524. Ser529, Ser530, Ser531, Ser635, and Ser638 each carry phosphoserine. Composition is skewed to acidic residues over residues 621–642 (DDDEEEEDEEEAQGSGESDGED) and 669–686 (DSEDEEEEDEEEEEDEEG). Positions 621 to 881 (DDDEEEEDEE…PEGPASPGSQ (261 aa)) are disordered. The span at 700–710 (YPSPGPQPPGP) shows a compositional bias: pro residues. Ser702, Ser726, and Ser759 each carry phosphoserine. The segment covering 814–830 (APSSSDSATRDPSTSVP) has biased composition (polar residues). At Ser846 the chain carries Phosphoserine.

Belongs to the SAPS family. Protein phosphatase 6 (PP6) holoenzyme is proposed to be a heterotrimeric complex formed of the catalytic subunit, a SAPS domain-containing subunit (PP6R) and an ankyrin repeat-domain containing regulatory subunit (ARS). Interacts with PPP6C and NFKBIE. Interacts with ANKRD28, ANKRD44 and ANKRD52. Ubiquitous with higher expression in testis.

It localises to the cytoplasm. Functionally, regulatory subunit of protein phosphatase 6 (PP6). May function as a scaffolding PP6 subunit. Involved in the PP6-mediated dephosphorylation of NFKBIE opposing its degradation in response to TNF-alpha. The polypeptide is Serine/threonine-protein phosphatase 6 regulatory subunit 1 (PPP6R1) (Homo sapiens (Human)).